A 269-amino-acid chain; its full sequence is Hydroxyethylthiazole kinase (269 aa).

Methionine 45 contributes to the substrate binding site. The ATP site is built by arginine 121 and threonine 167. Glycine 194 is a substrate binding site.

The protein belongs to the Thz kinase family. Mg(2+) is required as a cofactor.

The catalysed reaction is 5-(2-hydroxyethyl)-4-methylthiazole + ATP = 4-methyl-5-(2-phosphooxyethyl)-thiazole + ADP + H(+). It functions in the pathway cofactor biosynthesis; thiamine diphosphate biosynthesis; 4-methyl-5-(2-phosphoethyl)-thiazole from 5-(2-hydroxyethyl)-4-methylthiazole: step 1/1. In terms of biological role, catalyzes the phosphorylation of the hydroxyl group of 4-methyl-5-beta-hydroxyethylthiazole (THZ). The polypeptide is Hydroxyethylthiazole kinase (Bacillus cytotoxicus (strain DSM 22905 / CIP 110041 / 391-98 / NVH 391-98)).